A 481-amino-acid polypeptide reads, in one-letter code: Probable ATP-dependent RNA helicase ddx6 (481 aa).

The segment at 1-72 (MSTARTENPV…SVIKPGDDWK (72 aa)) is disordered. Positions 41–51 (INQLKNASTIN) are enriched in polar residues. Over residues 52 to 63 (SGSQQQAQSMSS) the composition is skewed to low complexity. Residues 95–123 (NEFEDYCLKRELLMGIFEMGWEKPSPIQE) carry the Q motif motif. Positions 126-297 (IPIALSGRDI…TSHLQKPYEI (172 aa)) constitute a Helicase ATP-binding domain. 139–146 (AKNGTGKS) lines the ATP pocket. The DEAD box signature appears at 245–248 (DEAD). In terms of domain architecture, Helicase C-terminal spans 307–467 (GVTQYYAYVT…PIPSSIDKSL (161 aa)).

The protein belongs to the DEAD box helicase family. DDX6/DHH1 subfamily. In terms of assembly, component of a ribonucleoprotein (RNP) complex, composed at least of cpeb1, lsm14b/rap55b, ddx6/Xp54, ybx2/frgy2, pat1/P100, eif4enif1/4E-T and eif4e1b. Component of a ribonucleoprotein (RNP) complex, composed at least of elavl1/elrA and/or elavl2/elrB, igf2bp3/vg1RBP, ddx6/Xp54, ybx2/frgy2, lsm14b/rap55b and, in a subset of RNP complexes, stau1/staufen. Component of a ribonucleoprotein (RNP) complex, composed at least of lsm14a/rap55a, ybx2/frgy2, ddx6/Xp54 and eif4enif1/4E-T. Interacts with lsm14a/rap55a.

It is found in the cytoplasm. The protein resides in the P-body. Its subcellular location is the nucleus. The enzyme catalyses ATP + H2O = ADP + phosphate + H(+). Its function is as follows. ATP-dependent RNA helicase that is an integral component of messenger ribonucleoprotein complexes (mRNPs), storage particles that mask maternal mRNAs from the translational apparatus during oocyte maturation. The protein is Probable ATP-dependent RNA helicase ddx6 (ddx6) of Xenopus tropicalis (Western clawed frog).